A 165-amino-acid chain; its full sequence is Neurotrophin-3 (165 aa).

The N-terminal stretch at I1–S3 is a signal peptide. Residues T4–R119 constitute a propeptide that is removed on maturation. N112 is a glycosylation site (N-linked (GlcNAc...) asparagine).

The protein belongs to the NGF-beta family.

It is found in the secreted. Seems to promote the survival of visceral and proprioceptive sensory neurons. In Morelia spilota (Carpet python), this protein is Neurotrophin-3 (NTF3).